The sequence spans 914 residues: Penicillin-binding protein 1A/1B (914 aa).

The segment at 1 to 29 (MSDQFNSREARRKANSKSSPSPKKGKKRK) is disordered. The Cytoplasmic segment spans residues 1-37 (MSDQFNSREARRKANSKSSPSPKKGKKRKKGGLFKKT). Residues 38-58 (LFTLLILFVLGVVGGAVTFAV) form a helical; Signal-anchor for type II membrane protein membrane-spanning segment. The Extracellular segment spans residues 59-914 (MVSDAPSLDE…TNSSSIEKTN (856 aa)). The segment at 77 to 246 (STIYDKNGKE…TAYNPVKNPD (170 aa)) is transglycosylase. Residue Glu115 is the Proton donor; for transglycosylase activity of the active site. The tract at residues 329–662 (TKAQDKLDEL…PDSVVEATVE (334 aa)) is transpeptidase. The active-site Acyl-ester intermediate; for transpeptidase activity is the Ser390. A Fibronectin type-III domain is found at 708–795 (KLSGLNVKYD…SYEVPKAEDD (88 aa)). The disordered stretch occupies residues 773–914 (TAVSDDGKST…TNSSSIEKTN (142 aa)). The segment covering 798 to 828 (KKDQQQTDDEKQDDEKTQDDTQTDDSQKDDG) has biased composition (basic and acidic residues). The span at 829–840 (QTDQDQTDDSTN) shows a compositional bias: acidic residues. Composition is skewed to low complexity over residues 848–892 (NTNT…GSDT) and 900–914 (SNKT…EKTN).

The protein in the N-terminal section; belongs to the glycosyltransferase 51 family. It in the C-terminal section; belongs to the transpeptidase family. The product expressed from the translation of the ponA gene appears as two bands on a gel (1A and 1B), but the specific amino acid sequence of each protein is unknown. In terms of processing, the N-terminus is blocked.

It is found in the cell membrane. The protein localises to the forespore inner membrane. The enzyme catalyses [GlcNAc-(1-&gt;4)-Mur2Ac(oyl-L-Ala-gamma-D-Glu-L-Lys-D-Ala-D-Ala)](n)-di-trans,octa-cis-undecaprenyl diphosphate + beta-D-GlcNAc-(1-&gt;4)-Mur2Ac(oyl-L-Ala-gamma-D-Glu-L-Lys-D-Ala-D-Ala)-di-trans,octa-cis-undecaprenyl diphosphate = [GlcNAc-(1-&gt;4)-Mur2Ac(oyl-L-Ala-gamma-D-Glu-L-Lys-D-Ala-D-Ala)](n+1)-di-trans,octa-cis-undecaprenyl diphosphate + di-trans,octa-cis-undecaprenyl diphosphate + H(+). The catalysed reaction is Preferential cleavage: (Ac)2-L-Lys-D-Ala-|-D-Ala. Also transpeptidation of peptidyl-alanyl moieties that are N-acyl substituents of D-alanine.. It functions in the pathway cell wall biogenesis; peptidoglycan biosynthesis. Functionally, cell wall formation. Synthesis of cross-linked peptidoglycan from the lipid intermediates. The enzyme has a penicillin-insensitive transglycosylase N-terminal domain (formation of linear glycan strands) and a penicillin-sensitive transpeptidase C-terminal domain (cross-linking of the peptide subunits). Required for vegetative growth. Has a partially redundant function with PBP-2A (pbpA) during spore outgrowth. In Bacillus subtilis (strain 168), this protein is Penicillin-binding protein 1A/1B (ponA).